The following is a 478-amino-acid chain: Glycogen synthase (478 aa).

Lysine 16 contacts ADP-alpha-D-glucose.

The protein belongs to the glycosyltransferase 1 family. Bacterial/plant glycogen synthase subfamily.

It catalyses the reaction [(1-&gt;4)-alpha-D-glucosyl](n) + ADP-alpha-D-glucose = [(1-&gt;4)-alpha-D-glucosyl](n+1) + ADP + H(+). It functions in the pathway glycan biosynthesis; glycogen biosynthesis. In terms of biological role, synthesizes alpha-1,4-glucan chains using ADP-glucose. The chain is Glycogen synthase from Lachnoclostridium phytofermentans (strain ATCC 700394 / DSM 18823 / ISDg) (Clostridium phytofermentans).